The primary structure comprises 366 residues: GTP cyclohydrolase 1 type 2 homolog (366 aa).

H64, H65, D102, H326, and E329 together coordinate a divalent metal cation.

This sequence belongs to the GTP cyclohydrolase I type 2/NIF3 family. Homohexamer.

This Staphylococcus epidermidis (strain ATCC 12228 / FDA PCI 1200) protein is GTP cyclohydrolase 1 type 2 homolog.